The following is a 629-amino-acid chain: Filament-like plant protein 2 (629 aa).

2 coiled-coil regions span residues W34–R61 and N102–E171. The disordered stretch occupies residues S186 to S205. The segment covering S193–E203 has biased composition (basic and acidic residues). Positions E270–E493 form a coiled coil.

This sequence belongs to the FPP family. Interacts with WPP/MAF proteins. Binds to COG2; this interaction promotes the association between cortical microtubules and EXO70A1. In terms of tissue distribution, accumulates in preferentially xylem cells.

The protein resides in the vesicle. Its function is as follows. Ensures, when in complex with FPP3/VETH1 and COG2, the correct secondary cell wall (SCW) deposition pattern by recruiting exocyst components to cortical microtubules in xylem cells during secondary cell wall deposition by recruiting EXO70A1. The protein is Filament-like plant protein 2 of Arabidopsis thaliana (Mouse-ear cress).